We begin with the raw amino-acid sequence, 158 residues long: NAD(P)H-quinone oxidoreductase subunit N (158 aa).

It belongs to the complex I NdhN subunit family. NDH-1 can be composed of about 15 different subunits; different subcomplexes with different compositions have been identified which probably have different functions.

It localises to the cellular thylakoid membrane. It catalyses the reaction a plastoquinone + NADH + (n+1) H(+)(in) = a plastoquinol + NAD(+) + n H(+)(out). It carries out the reaction a plastoquinone + NADPH + (n+1) H(+)(in) = a plastoquinol + NADP(+) + n H(+)(out). NDH-1 shuttles electrons from an unknown electron donor, via FMN and iron-sulfur (Fe-S) centers, to quinones in the respiratory and/or the photosynthetic chain. The immediate electron acceptor for the enzyme in this species is believed to be plastoquinone. Couples the redox reaction to proton translocation, and thus conserves the redox energy in a proton gradient. Cyanobacterial NDH-1 also plays a role in inorganic carbon-concentration. The sequence is that of NAD(P)H-quinone oxidoreductase subunit N from Prochlorococcus marinus (strain AS9601).